Consider the following 481-residue polypeptide: Membrane-bound lytic murein transglycosylase F (481 aa).

An N-terminal signal peptide occupies residues methionine 1 to alanine 21. The segment at leucine 22 to valine 268 is non-LT domain. The interval glycine 269–glutamate 481 is LT domain. The active site involves glutamate 313.

In the N-terminal section; belongs to the bacterial solute-binding protein 3 family. It in the C-terminal section; belongs to the transglycosylase Slt family.

The protein localises to the cell outer membrane. The enzyme catalyses Exolytic cleavage of the (1-&gt;4)-beta-glycosidic linkage between N-acetylmuramic acid (MurNAc) and N-acetylglucosamine (GlcNAc) residues in peptidoglycan, from either the reducing or the non-reducing ends of the peptidoglycan chains, with concomitant formation of a 1,6-anhydrobond in the MurNAc residue.. Its function is as follows. Murein-degrading enzyme that degrades murein glycan strands and insoluble, high-molecular weight murein sacculi, with the concomitant formation of a 1,6-anhydromuramoyl product. Lytic transglycosylases (LTs) play an integral role in the metabolism of the peptidoglycan (PG) sacculus. Their lytic action creates space within the PG sacculus to allow for its expansion as well as for the insertion of various structures such as secretion systems and flagella. In Pectobacterium atrosepticum (strain SCRI 1043 / ATCC BAA-672) (Erwinia carotovora subsp. atroseptica), this protein is Membrane-bound lytic murein transglycosylase F.